We begin with the raw amino-acid sequence, 422 residues long: Ribosomal RNA small subunit methyltransferase B (422 aa).

S-adenosyl-L-methionine-binding positions include 254 to 260, aspartate 277, aspartate 303, and aspartate 322; that span reads CAAPGGK. Residue cysteine 375 is the Nucleophile of the active site.

This sequence belongs to the class I-like SAM-binding methyltransferase superfamily. RsmB/NOP family.

The protein resides in the cytoplasm. It carries out the reaction cytidine(967) in 16S rRNA + S-adenosyl-L-methionine = 5-methylcytidine(967) in 16S rRNA + S-adenosyl-L-homocysteine + H(+). In terms of biological role, specifically methylates the cytosine at position 967 (m5C967) of 16S rRNA. The polypeptide is Ribosomal RNA small subunit methyltransferase B (Proteus mirabilis (strain HI4320)).